The chain runs to 159 residues: Olfactory receptor-like protein COR8 (159 aa).

The Cytoplasmic portion of the chain corresponds to 1–16 (VAICNPLLYTISMPKS). Residues 17 to 41 (LCMKLVAGSYLGGVLNSLTQTCCLL) traverse the membrane as a helical segment. The Extracellular portion of the chain corresponds to 42–82 (PLPFCGPNVINHYFCDTNPLLKLTCSDGRLNELLLVTFNGT). Asparagine 80 carries N-linked (GlcNAc...) asparagine glycosylation. A helical membrane pass occupies residues 83 to 103 (ISMTVLLIIVISYVYILVSIL). Residues 104–116 (SIRSARGRHKAFS) are Cytoplasmic-facing. Residues 117-137 (TCASHLLTVTLFYVPAGLSHM) form a helical membrane-spanning segment. Residues 138–148 (QPGSKYSLDME) are Extracellular-facing. A helical membrane pass occupies residues 149 to 159 (KVTAVFYTLLV).

Belongs to the G-protein coupled receptor 1 family.

The protein localises to the cell membrane. Its function is as follows. Odorant receptor. The sequence is that of Olfactory receptor-like protein COR8 (COR8) from Gallus gallus (Chicken).